A 288-amino-acid chain; its full sequence is UTP--glucose-1-phosphate uridylyltransferase (288 aa).

It belongs to the UDPGP type 2 family.

It catalyses the reaction alpha-D-glucose 1-phosphate + UTP + H(+) = UDP-alpha-D-glucose + diphosphate. It participates in glycolipid metabolism; diglucosyl-diacylglycerol biosynthesis. In terms of biological role, catalyzes the formation of UDP-glucose from glucose-1-phosphate and UTP. This is an intermediate step in the biosynthesis of diglucosyl-diacylglycerol (Glc2-DAG), i.e. a glycolipid found in the membrane, which is also used as a membrane anchor for lipoteichoic acid (LTA). This Staphylococcus haemolyticus (strain JCSC1435) protein is UTP--glucose-1-phosphate uridylyltransferase (gtaB).